A 178-amino-acid polypeptide reads, in one-letter code: Phosphopantetheine adenylyltransferase (178 aa).

Thr-17 is a substrate binding site. Residues 17–18 (TF) and His-25 contribute to the ATP site. 3 residues coordinate substrate: Lys-49, Leu-86, and Arg-100. Residues 101 to 103 (GLR), Glu-111, and 136 to 142 (LQPVASR) contribute to the ATP site.

Belongs to the bacterial CoaD family. Homohexamer. It depends on Mg(2+) as a cofactor.

It is found in the cytoplasm. It carries out the reaction (R)-4'-phosphopantetheine + ATP + H(+) = 3'-dephospho-CoA + diphosphate. Its pathway is cofactor biosynthesis; coenzyme A biosynthesis; CoA from (R)-pantothenate: step 4/5. Functionally, reversibly transfers an adenylyl group from ATP to 4'-phosphopantetheine, yielding dephospho-CoA (dPCoA) and pyrophosphate. This chain is Phosphopantetheine adenylyltransferase, found in Zymomonas mobilis subsp. mobilis (strain ATCC 31821 / ZM4 / CP4).